The following is a 101-amino-acid chain: Ubiquitin-related modifier 1 (101 aa).

1-thioglycine is present on G101. G101 is covalently cross-linked (Glycyl lysine isopeptide (Gly-Lys) (interchain with K-? in acceptor proteins)).

Belongs to the URM1 family. As to quaternary structure, component of a complex at least composed of URM1, CTU2/NCS2 and CTU1/ATPBD3. Post-translationally, C-terminal thiocarboxylation occurs in 2 steps, it is first acyl-adenylated (-COAMP) via the hesA/moeB/thiF part of MOCS3, then thiocarboxylated (-COSH) via the rhodanese domain of MOCS3.

The protein localises to the cytoplasm. The protein operates within tRNA modification; 5-methoxycarbonylmethyl-2-thiouridine-tRNA biosynthesis. Its function is as follows. Acts as a sulfur carrier required for 2-thiolation of mcm(5)S(2)U at tRNA wobble positions of cytosolic tRNA(Lys), tRNA(Glu) and tRNA(Gln). Serves as sulfur donor in tRNA 2-thiolation reaction by being thiocarboxylated (-COSH) at its C-terminus by MOCS3. The sulfur is then transferred to tRNA to form 2-thiolation of mcm(5)S(2)U. Also acts as a ubiquitin-like protein (UBL) that is covalently conjugated via an isopeptide bond to lysine residues of target proteins such as MOCS3, ATPBD3, CTU2, USP15 and CAS. The thiocarboxylated form serves as substrate for conjugation and oxidative stress specifically induces the formation of UBL-protein conjugates. In Homo sapiens (Human), this protein is Ubiquitin-related modifier 1.